The primary structure comprises 542 residues: Retron Ec83 probable ATPase (542 aa).

The ATP-binding motif lies at 92–99 (GNNGCGKS).

In terms of biological role, probable ATPase component of antiviral defense system retron Ec83, composed of a non-coding RNA (ncRNA), a reverse transcriptase (RT), this protein and a putative HNH endonuclease. Expression of retron Ec83 confers protection against bacteriophage T2, T4 and T6. At multiplicity of infection (MOI) of 0.02 cultures slow growth when infected with T4 but do not collapse, at MOI 2 cultures enter growth stasis. This chain is Retron Ec83 probable ATPase, found in Escherichia coli.